Reading from the N-terminus, the 84-residue chain is ATP synthase subunit c (84 aa).

2 helical membrane passes run 9–29 (IFGSVILLAVAALATAIGFSL) and 54–74 (IVAGLLDAISMIAVGIALLFI).

The protein belongs to the ATPase C chain family. As to quaternary structure, F-type ATPases have 2 components, F(1) - the catalytic core - and F(0) - the membrane proton channel. F(1) has five subunits: alpha(3), beta(3), gamma(1), delta(1), epsilon(1). F(0) has three main subunits: a(1), b(2) and c(10-14). The alpha and beta chains form an alternating ring which encloses part of the gamma chain. F(1) is attached to F(0) by a central stalk formed by the gamma and epsilon chains, while a peripheral stalk is formed by the delta and b chains.

It is found in the cell inner membrane. Functionally, f(1)F(0) ATP synthase produces ATP from ADP in the presence of a proton or sodium gradient. F-type ATPases consist of two structural domains, F(1) containing the extramembraneous catalytic core and F(0) containing the membrane proton channel, linked together by a central stalk and a peripheral stalk. During catalysis, ATP synthesis in the catalytic domain of F(1) is coupled via a rotary mechanism of the central stalk subunits to proton translocation. Its function is as follows. Key component of the F(0) channel; it plays a direct role in translocation across the membrane. A homomeric c-ring of between 10-14 subunits forms the central stalk rotor element with the F(1) delta and epsilon subunits. The chain is ATP synthase subunit c from Histophilus somni (strain 129Pt) (Haemophilus somnus).